A 147-amino-acid chain; its full sequence is 3-dehydroquinate dehydratase (147 aa).

Catalysis depends on Y22, which acts as the Proton acceptor. Substrate contacts are provided by N76, H82, and D89. H102 (proton donor) is an active-site residue. Substrate is bound by residues 103–104 (IS) and R113.

It belongs to the type-II 3-dehydroquinase family. As to quaternary structure, homododecamer.

The enzyme catalyses 3-dehydroquinate = 3-dehydroshikimate + H2O. It functions in the pathway metabolic intermediate biosynthesis; chorismate biosynthesis; chorismate from D-erythrose 4-phosphate and phosphoenolpyruvate: step 3/7. Functionally, catalyzes a trans-dehydration via an enolate intermediate. The polypeptide is 3-dehydroquinate dehydratase (Fusobacterium nucleatum subsp. nucleatum (strain ATCC 25586 / DSM 15643 / BCRC 10681 / CIP 101130 / JCM 8532 / KCTC 2640 / LMG 13131 / VPI 4355)).